Here is a 745-residue protein sequence, read N- to C-terminus: 5-methyltetrahydropteroyltriglutamate--homocysteine methyltransferase (745 aa).

Residues 16–19 (REWK) and Lys-110 each bind 5-methyltetrahydropteroyltri-L-glutamate. L-homocysteine contacts are provided by residues 420–422 (IGS) and Glu-473. Residues 420–422 (IGS) and Glu-473 contribute to the L-methionine site. 5-methyltetrahydropteroyltri-L-glutamate is bound at residue Trp-550. Position 588 (Asp-588) interacts with L-homocysteine. Asp-588 serves as a coordination point for L-methionine. Glu-594 serves as a coordination point for 5-methyltetrahydropteroyltri-L-glutamate. Residues His-630, Cys-632, and Glu-654 each contribute to the Zn(2+) site. The active-site Proton donor is the His-683. Cys-715 provides a ligand contact to Zn(2+).

Belongs to the vitamin-B12 independent methionine synthase family. It depends on Zn(2+) as a cofactor.

The enzyme catalyses 5-methyltetrahydropteroyltri-L-glutamate + L-homocysteine = tetrahydropteroyltri-L-glutamate + L-methionine. It participates in amino-acid biosynthesis; L-methionine biosynthesis via de novo pathway; L-methionine from L-homocysteine (MetE route): step 1/1. Functionally, catalyzes the transfer of a methyl group from 5-methyltetrahydrofolate to homocysteine resulting in methionine formation. The sequence is that of 5-methyltetrahydropteroyltriglutamate--homocysteine methyltransferase from Streptococcus agalactiae serotype III (strain NEM316).